The chain runs to 249 residues: tRNA pseudouridine synthase A (249 aa).

Aspartate 53 serves as the catalytic Nucleophile. Tyrosine 111 is a substrate binding site.

Belongs to the tRNA pseudouridine synthase TruA family. In terms of assembly, homodimer.

It catalyses the reaction uridine(38/39/40) in tRNA = pseudouridine(38/39/40) in tRNA. Its function is as follows. Formation of pseudouridine at positions 38, 39 and 40 in the anticodon stem and loop of transfer RNAs. This is tRNA pseudouridine synthase A from Streptococcus mutans serotype c (strain ATCC 700610 / UA159).